The following is a 1162-amino-acid chain: Sialidase (1162 aa).

BNR repeat units lie at residues 23 to 34, 163 to 174, and 209 to 220; these read KYSVDDGETWET, FYSEDDGKTWKF, and YESSDMEKPWVE. Asparagine 342 and asparagine 394 each carry an N-linked (GlcNAc...) asparagine glycan. A disordered region spans residues 587-1123; it reads HMDSSSDSSA…STPSTPAGSS (537 aa). Positions 589–615 are enriched in low complexity; sequence DSSSDSSAHSTPSTPADSSAHSTPSTP. The interval 589–1120 is 44 X 12 AA tandem repeats, LTR domain; it reads DSSSDSSAHS…SAHSTPSTPA (532 aa). Polar residues-rich tracts occupy residues 616-689 and 699-1123; these read VDSS…TPVD and PADS…AGSS. N-linked (GlcNAc...) asparagine glycosylation occurs at asparagine 1125.

It belongs to the glycosyl hydrolase 33 family.

The protein resides in the cell membrane. The enzyme catalyses Hydrolysis of alpha-(2-&gt;3)-, alpha-(2-&gt;6)-, alpha-(2-&gt;8)- glycosidic linkages of terminal sialic acid residues in oligosaccharides, glycoproteins, glycolipids, colominic acid and synthetic substrates.. Functionally, developmentally regulated neuraminidase implicated in parasite invasion of cells. In Trypanosoma cruzi, this protein is Sialidase (TCNA).